Reading from the N-terminus, the 394-residue chain is Ribulose bisphosphate carboxylase large chain (394 aa).

Lys5 is subject to N6,N6,N6-trimethyllysine. Residues Asn114 and Thr164 each contribute to the substrate site. Residue Lys166 is the Proton acceptor of the active site. Position 168 (Lys168) interacts with substrate. Mg(2+) contacts are provided by Lys192, Asp194, and Glu195. The residue at position 192 (Lys192) is an N6-carboxylysine. The active-site Proton acceptor is the His285. The substrate site is built by Arg286, His318, and Ser370.

Belongs to the RuBisCO large chain family. Type I subfamily. As to quaternary structure, heterohexadecamer of 8 large chains and 8 small chains; disulfide-linked. The disulfide link is formed within the large subunit homodimers. Requires Mg(2+) as cofactor. The disulfide bond which can form in the large chain dimeric partners within the hexadecamer appears to be associated with oxidative stress and protein turnover.

It localises to the plastid. The protein resides in the chloroplast. It catalyses the reaction 2 (2R)-3-phosphoglycerate + 2 H(+) = D-ribulose 1,5-bisphosphate + CO2 + H2O. It carries out the reaction D-ribulose 1,5-bisphosphate + O2 = 2-phosphoglycolate + (2R)-3-phosphoglycerate + 2 H(+). Its function is as follows. RuBisCO catalyzes two reactions: the carboxylation of D-ribulose 1,5-bisphosphate, the primary event in carbon dioxide fixation, as well as the oxidative fragmentation of the pentose substrate in the photorespiration process. Both reactions occur simultaneously and in competition at the same active site. This chain is Ribulose bisphosphate carboxylase large chain (rbcL), found in Alisma plantago-aquatica (Common water-plantain).